The sequence spans 131 residues: uncharacterized protein (131 aa).

The N-terminal stretch at 1-26 (MKKIVAAIVVIGLVFIAFFYLYSRSG) is a signal peptide.

This is an uncharacterized protein from Bacillus subtilis (strain 168).